Reading from the N-terminus, the 509-residue chain is SH2 domain-containing adapter protein B (509 aa).

2 disordered regions span residues 1–103 (MAKW…GSSL) and 144–178 (SGAG…EVRY). A mediates interaction with LAT, PTK2/FAK1, JAK1 and JAK3 region spans residues 1-410 (MAKWLNKYFS…PAVPLEKQIW (410 aa)). A compositionally biased stretch (low complexity) spans 44–61 (VPQASSAASASCGPATAS). Residues 62 to 79 (CFSASSGSLPDDSGSTSD) show a composition bias toward polar residues. Position 102 is a phosphoserine (serine 102). Over residues 144–158 (SGAGAAASSSSSSGS) the composition is skewed to low complexity. Lysine 187 is covalently cross-linked (Glycyl lysine isopeptide (Lys-Gly) (interchain with G-Cter in SUMO2)). Residues 229-385 (AEESGAGKKD…APGGGFKPIK (157 aa)) form a disordered region. 2 stretches are compositionally biased toward basic and acidic residues: residues 233 to 242 (GAGKKDKVTI) and 250 to 262 (FDAK…KAGK). A phosphoserine mark is found at serine 307 and serine 317. Positions 307–317 (SVDSDSESTVS) are enriched in polar residues. The segment covering 319–334 (RLRESKLPQDDDRPAD) has biased composition (basic and acidic residues). Serine 388 bears the Phosphoserine mark. The SH2 domain maps to 410-504 (WYHGAISRGD…AEHLSLLYPV (95 aa)).

Interacts with PTPN11. Interacts with phosphorylated 'Tyr-720' of the ligand-activated receptor PDGFRA via its SH2 domain. Interacts with the ligand-activated receptors PDGFRB, FGFR1, KDR/VEGFR2, IL2RB and IL2RG. Interacts with EPS8 and V-SRC. Interacts with GRB2 and GRAP. Interacts with CD3Z. Interacts with tyrosine-phosphorylated LAT upon T-cell antigen receptor activation. Interacts with PLCG1. Interacts with ZAP70, LCP2/SLP-76, VAV1 and GRAP2. Interacts with JAK1 and JAK3. Interacts with PTK2/FAK1. Interacts with CRK/CrKII. Interacts with IRS2. Post-translationally, phosphorylated upon PDGFRA, PDGFRB, TCR, IL2 receptor, FGFR1 or VEGFR2 activation. In terms of tissue distribution, widely expressed.

The protein resides in the cytoplasm. It localises to the cell membrane. Functionally, adapter protein which regulates several signal transduction cascades by linking activated receptors to downstream signaling components. May play a role in angiogenesis by regulating FGFR1, VEGFR2 and PDGFR signaling. May also play a role in T-cell antigen receptor/TCR signaling, interleukin-2 signaling, apoptosis and neuronal cells differentiation by mediating basic-FGF and NGF-induced signaling cascades. May also regulate IRS1 and IRS2 signaling in insulin-producing cells. The chain is SH2 domain-containing adapter protein B (SHB) from Homo sapiens (Human).